The sequence spans 253 residues: Molybdate import ATP-binding protein MolC (253 aa).

An ABC transporter domain is found at 5–229 (LSVENLGFYY…NLTALFHLPM (225 aa)). ATP is bound at residue 38-45 (GQNGCGKS).

This sequence belongs to the ABC transporter superfamily. The complex is composed of two ATP-binding proteins (MolC), two transmembrane proteins (MolB) and a solute-binding protein (MolA).

The protein resides in the cell inner membrane. It carries out the reaction molybdate(out) + ATP + H2O = molybdate(in) + ADP + phosphate + H(+). The MolBCA complex shows a decrease in affinity in the presence of increasing concentrations of substrate and nucleotide. Its function is as follows. Part of the ABC transporter complex MolBCA involved in molybdate import. Responsible for energy coupling to the transport system. Functions as a low-affinity molybdate transporter. The protein is Molybdate import ATP-binding protein MolC of Haemophilus influenzae (strain ATCC 51907 / DSM 11121 / KW20 / Rd).